The following is a 123-amino-acid chain: MHIIAKSILLMAVSFLVIIFTSTIYSELIEIGKYRYIDKVDREITSEVMNAVVLANEGNITLYKKINLNCKVIFENNSFTIIFQNKTYVHKFNNNIRFFKNEISDISKISCKKVNNTYMIYIE.

The chain crosses the membrane as a helical span at residues 1–21 (MHIIAKSILLMAVSFLVIIFT).

The protein localises to the membrane. This is an uncharacterized protein from Methanocaldococcus jannaschii (strain ATCC 43067 / DSM 2661 / JAL-1 / JCM 10045 / NBRC 100440) (Methanococcus jannaschii).